The sequence spans 177 residues: CRIB domain-containing protein RIC8 (177 aa).

Residues isoleucine 17 to glycine 30 form the CRIB domain. A compositionally biased stretch (basic and acidic residues) spans serine 72 to serine 89. The disordered stretch occupies residues serine 72–threonine 177. Residues glycine 158–serine 171 show a composition bias toward low complexity.

Functions as a downstream effector of Rho-related GTP binding proteins of the 'Rho of Plants' (ROPs) family. Participates in the propagation of ROP GTPase signals in specific cellular responses. The protein is CRIB domain-containing protein RIC8 (RIC8) of Arabidopsis thaliana (Mouse-ear cress).